Here is a 216-residue protein sequence, read N- to C-terminus: MSCLPALDKFLQNYHQAYLTSLGELLRYYPQGEASVCIQGEFHADLDQAVSWQPVKREVEGSFANVEHALELTLWPEINHFYGQYFSAPLLFDSEWGTGELLQVWNEDDFTCLQQNLIGHLMMKKKLKQPPTWFIGLLDEGDKMLTINNSDGSVWIELPGEIPTQQLSPSLAEFIGALSPRIAPPVKHEELPMPALEHPGIFASFKRMWQNLFGKR.

Belongs to the Syd family.

Its subcellular location is the cell inner membrane. Interacts with the SecY protein in vivo. May bind preferentially to an uncomplexed state of SecY, thus functioning either as a chelating agent for excess SecY in the cell or as a regulatory factor that negatively controls the translocase function. This chain is Protein Syd, found in Shewanella baltica (strain OS185).